Here is a 142-residue protein sequence, read N- to C-terminus: Nucleoside diphosphate kinase (142 aa).

Residues Lys-11, Phe-59, Arg-87, Thr-93, Arg-104, and Asn-114 each coordinate ATP. The active-site Pros-phosphohistidine intermediate is His-117.

The protein belongs to the NDK family. As to quaternary structure, homotetramer. Requires Mg(2+) as cofactor.

It is found in the cytoplasm. The enzyme catalyses a 2'-deoxyribonucleoside 5'-diphosphate + ATP = a 2'-deoxyribonucleoside 5'-triphosphate + ADP. It carries out the reaction a ribonucleoside 5'-diphosphate + ATP = a ribonucleoside 5'-triphosphate + ADP. Its function is as follows. Major role in the synthesis of nucleoside triphosphates other than ATP. The ATP gamma phosphate is transferred to the NDP beta phosphate via a ping-pong mechanism, using a phosphorylated active-site intermediate. The protein is Nucleoside diphosphate kinase of Dechloromonas aromatica (strain RCB).